Consider the following 1633-residue polypeptide: Serine-aspartate repeat-containing protein F (1633 aa).

The first 45 residues, 1–45, serve as a signal peptide directing secretion; the sequence is MKKRRQGPINKRVDFLSNKVNKYSIRKFTVGTASILVGATLMFGA. Residues 46–678 are ligand binding A region; the sequence is ADNEAKAAED…GSSTAQGDNP (633 aa). The interval 51–269 is disordered; it reads KAAEDNQLES…SISTDSSVND (219 aa). A compositionally biased stretch (basic and acidic residues) spans 61-74; the sequence is ASKEEQKGSRDNES. Composition is skewed to polar residues over residues 85–99 and 146–168; these read GSHS…NNAT and PKTS…DNLN. Residues 175 to 184 show a composition bias toward basic and acidic residues; that stretch reads KESKTDEHST. The segment covering 186-226 has biased composition (polar residues); sequence QAQMSTNKSNLDTNDSPTQSEKTSSQANNDSTDNQSAPSKQ. Residues 227 to 253 are compositionally biased toward basic and acidic residues; sequence LDSKPSEQKVYKTKFNDEPTQDVEHTT. Positions 255-266 are enriched in polar residues; sequence KLKTPSISTDSS. 4 CNA-B domains span residues 679-797, 798-907, 908-1018, and 1019-1129; these read TYSL…YLTP, KYNV…FYKP, IYNL…YKTP, and KYSV…FDDD. The tract at residues 679 to 1129 is type I collagen binding region; sequence TYSLGDYVWL…SIDNGYFDDD (451 aa). Residues 862–889 form a disordered region; it reads FETPEGYTPTKQNSGSDEGKDSNGTKTT. The disordered stretch occupies residues 1085 to 1608; the sequence is KPEGMTQTTA…ANEDHDSKGT (524 aa). Basic and acidic residues predominate over residues 1107–1119; the sequence is EDVRVTITDHDDF. Residues 1125-1584 show a composition bias toward acidic residues; that stretch reads YFDDDSDSDS…DSDSDSDSDS (460 aa). Residues 1585–1606 are compositionally biased toward basic and acidic residues; sequence DSDKNAKDKLPDTGANEDHDSK. Residues 1594 to 1598 carry the LPXTG sorting signal motif; the sequence is LPDTG. At T1597 the chain carries Pentaglycyl murein peptidoglycan amidated threonine. Residues 1598-1633 constitute a propeptide, removed by sortase; it reads GANEDHDSKGTLLGTLFAGLGALLLGRRRKKDNKEK.

Belongs to the serine-aspartate repeat-containing protein (SDr) family.

The protein resides in the secreted. The protein localises to the cell wall. Binds to type I collagen via alpha-2(I) or alpha-1(I) chains. The protein is Serine-aspartate repeat-containing protein F (sdrF) of Staphylococcus epidermidis (strain ATCC 12228 / FDA PCI 1200).